Here is a 452-residue protein sequence, read N- to C-terminus: Chloride/fluoride channel protein (452 aa).

10 consecutive transmembrane segments (helical) span residues 23–43, 57–77, 97–117, 160–180, 188–208, 222–242, 264–284, 315–337, 344–364, and 386–408; these read WLALAGLVALLAGSASALFLL, WVIWLLPVAGFAVGLAYHLIG, IVPLRMVPMVLIGTVVSHLFG, FASVFGTPLAGALFGLEVLAI, LFPCVVAAIVADQVGQAWGVV, LWSVMAVVAAGIVFGLTGLLF, PFAGGLLIAVAVWALGSNHYI, VFTVVSLGTGFKGGEVTPLFYIG, LAPLLHLPFGMLAGIGFVAVF, and IAPLAAIACIASYLVSGHTGIYH.

The protein belongs to the chloride channel (TC 2.A.49) family.

The protein resides in the cell membrane. Functionally, transports chloride and fluoride with similar efficiency. This Pseudomonas syringae pv. tomato (strain ATCC BAA-871 / DC3000) protein is Chloride/fluoride channel protein (eriC).